An 88-amino-acid polypeptide reads, in one-letter code: UPF0250 protein Shal_3239 (88 aa).

This sequence belongs to the UPF0250 family.

The polypeptide is UPF0250 protein Shal_3239 (Shewanella halifaxensis (strain HAW-EB4)).